The following is a 553-amino-acid chain: CTP synthase (553 aa).

The tract at residues 1–278 (MVRRTHGNSQ…DAYVVRELGL (278 aa)) is amidoligase domain. Serine 25 provides a ligand contact to CTP. Serine 25 is a binding site for UTP. ATP-binding positions include 26 to 31 (SLGKGL) and aspartate 83. Residues aspartate 83 and glutamate 152 each coordinate Mg(2+). CTP-binding positions include 159 to 161 (DIE), 199 to 204 (KTKPTQ), and lysine 235. UTP contacts are provided by residues 199–204 (KTKPTQ) and lysine 235. The Glutamine amidotransferase type-1 domain maps to 303–552 (NIAIVGKYID…VKAALDHQAA (250 aa)). L-glutamine is bound at residue glycine 366. Cysteine 393 acts as the Nucleophile; for glutamine hydrolysis in catalysis. L-glutamine is bound by residues 394 to 397 (LGLQ), glutamate 417, and arginine 478. Residues histidine 525 and glutamate 527 contribute to the active site.

This sequence belongs to the CTP synthase family. As to quaternary structure, homotetramer.

It carries out the reaction UTP + L-glutamine + ATP + H2O = CTP + L-glutamate + ADP + phosphate + 2 H(+). The catalysed reaction is L-glutamine + H2O = L-glutamate + NH4(+). It catalyses the reaction UTP + NH4(+) + ATP = CTP + ADP + phosphate + 2 H(+). It functions in the pathway pyrimidine metabolism; CTP biosynthesis via de novo pathway; CTP from UDP: step 2/2. Its activity is regulated as follows. Allosterically activated by GTP, when glutamine is the substrate; GTP has no effect on the reaction when ammonia is the substrate. The allosteric effector GTP functions by stabilizing the protein conformation that binds the tetrahedral intermediate(s) formed during glutamine hydrolysis. Inhibited by the product CTP, via allosteric rather than competitive inhibition. Functionally, catalyzes the ATP-dependent amination of UTP to CTP with either L-glutamine or ammonia as the source of nitrogen. Regulates intracellular CTP levels through interactions with the four ribonucleotide triphosphates. This is CTP synthase from Bifidobacterium longum (strain NCC 2705).